A 223-amino-acid chain; its full sequence is UPF0441 protein YgiB (223 aa).

The span at 178–195 (TVPKTAMAPKPATTTTVT) shows a compositional bias: low complexity. Residues 178–223 (TVPKTAMAPKPATTTTVTRGGFGESVAKQSTMQRSAAGTSTRSMGG) form a disordered region. The span at 204–223 (AKQSTMQRSAAGTSTRSMGG) shows a compositional bias: polar residues.

Belongs to the UPF0441 family.

The protein is UPF0441 protein YgiB of Salmonella paratyphi A (strain ATCC 9150 / SARB42).